A 52-amino-acid polypeptide reads, in one-letter code: Phospholamban (52 aa).

Residue M1 is modified to N-acetylmethionine. The Cytoplasmic segment spans residues 1–31 (MEKVQYLTRSAIRRASTIEMPQQARQNLQNL). The residue at position 16 (S16) is a Phosphoserine; by PKA. T17 is subject to Phosphothreonine; by CaMK2. Residues 32 to 52 (FINFCLILICLLLICIIVMLL) traverse the membrane as a helical segment. The S-palmitoyl cysteine moiety is linked to residue C36.

This sequence belongs to the phospholamban family. As to quaternary structure, homopentamer. Can also form heterooligomers with other sarcoplasmic/endoplasmic reticulum calcium ATPase (SERCA) regulators ARLN, ERLN, SLN and STRIT1/DWORF. Monomer. Interacts with HAX1. Interacts as a monomer with ATP2A2; the interaction decreases ATP2A2 Ca(2+) affinity. Interacts with VMP1; VMP1 competes with PLN and SLN to prevent them from forming an inhibitory complex with ATP2A2. Interacts with S100A1 in a Ca(2+)-dependent manner. Phosphorylated at Thr-17 by CaMK2, and in response to beta-adrenergic stimulation. Phosphorylation by DMPK may stimulate sarcoplasmic reticulum calcium uptake in cardiomyocytes. Phosphorylation by PKA abolishes the inhibition of ATP2A2-mediated calcium uptake. In terms of processing, palmitoylated by ZDHHC16, promoting formation of the homopentamer. Post-translationally, in elongated spermatids, proteolytically cleaved by SPPL2C which modulates intracellular Ca(2+) homeostasis. In terms of tissue distribution, expressed in testis (at protein level). In brain, expressed specifically in GABAergic GAD67+ neurons of the thalamic reticular nucleus where it colocalizes with ATP2A2/SERCA2 (at protein level). Expressed in the bladder and in the atria and ventricles of the heart.

The protein localises to the endoplasmic reticulum membrane. It is found in the sarcoplasmic reticulum membrane. The protein resides in the mitochondrion membrane. It localises to the membrane. Reversibly inhibits the activity of ATP2A2/SERCA2 in cardiac sarcoplasmic reticulum by decreasing the apparent affinity of the ATPase for Ca(2+). Binds preferentially to the ATP-bound E1 conformational form of ATP2A2 which predominates at low Ca(2+) concentrations during the diastolic phase of the cardiac cycle. Inhibits ATP2A2 Ca(2+) affinity by disrupting its allosteric activation by ATP. Modulates the contractility of the heart muscle in response to physiological stimuli via its effects on ATP2A2. Modulates calcium re-uptake during muscle relaxation and plays an important role in calcium homeostasis in the heart muscle. The degree of ATP2A2 inhibition depends on the oligomeric state of PLN. ATP2A2 inhibition is alleviated by PLN phosphorylation. Also inhibits the activity of ATP2A3/SERCA3. Controls intracellular Ca(2+) levels in elongated spermatids and may play a role in germ cell differentiation. In the thalamic reticular nucleus of the brain, plays a role in the regulation of sleep patterns and executive functioning. The sequence is that of Phospholamban from Mus musculus (Mouse).